A 458-amino-acid chain; its full sequence is Brassinosteroid-related acyltransferase 1 (458 aa).

His-164 acts as the Proton acceptor in catalysis.

Belongs to the plant acyltransferase family. In terms of tissue distribution, highly expressed in young tissues and vascular bundles. Mostly expressed in young leaves, primary roots, flowers (including petals and sepals), and siliques.

The protein resides in the endoplasmic reticulum. The protein localises to the nucleus. It participates in plant hormone biosynthesis; brassinosteroid biosynthesis. Its function is as follows. Brassinosteroids (BR) acyltransferase with acyl-CoA ligase activity toward brassinolide (BL), castasterone (CS), typhasterol (TY), 6-deoxotyphasterol (6-deoxoTY), and 6-deoxocastasterone (6-deoxoCS) and thus converts them to corresponding lauroyl esters. Regulates BR homeostasis and promotes BR-mediated cell growth regulation. Involved in vascular bundle development. The chain is Brassinosteroid-related acyltransferase 1 from Arabidopsis thaliana (Mouse-ear cress).